Reading from the N-terminus, the 213-residue chain is Adenylate kinase (213 aa).

An ATP-binding site is contributed by 10–15 (GAGKGT). The NMP stretch occupies residues 30–59 (STGDMFRAAMANQTEMGVLAKSYIDKGDLV). AMP-binding positions include Thr31, Arg36, 57-59 (DLV), 86-89 (GYPR), and Gln93. The interval 127-160 (GRIINKKTGETFHKIFNPPVGDYKEEDFYQREDD) is LID. ATP is bound by residues Arg128 and 137-138 (TF). Residues Arg157 and Arg168 each contribute to the AMP site. Residue Lys196 participates in ATP binding.

It belongs to the adenylate kinase family. Monomer.

The protein resides in the cytoplasm. The enzyme catalyses AMP + ATP = 2 ADP. The protein operates within purine metabolism; AMP biosynthesis via salvage pathway; AMP from ADP: step 1/1. Functionally, catalyzes the reversible transfer of the terminal phosphate group between ATP and AMP. Plays an important role in cellular energy homeostasis and in adenine nucleotide metabolism. The sequence is that of Adenylate kinase from Streptococcus equi subsp. zooepidemicus (strain H70).